We begin with the raw amino-acid sequence, 263 residues long: Killer cell lectin-like receptor 4 (263 aa).

Over 1–44 (MTEQEDTFSAVRFHKSSGLQNEMRLKETRKPEKARLRVCSVPWQ) the chain is Cytoplasmic. The chain crosses the membrane as a helical; Signal-anchor for type II membrane protein span at residues 45 to 65 (LIVIALGILISLRLVTVAVLM). The Extracellular portion of the chain corresponds to 66 to 263 (TNIFQYGQQK…CGKRLDKFPH (198 aa)). Residues Asn-87 and Asn-104 are each glycosylated (N-linked (GlcNAc...) asparagine). The C-type lectin domain occupies 139 to 258 (GVKVYWFCYG…SFICICGKRL (120 aa)). Cystine bridges form between Cys-146/Cys-151, Cys-164/Cys-252, Cys-168/Cys-254, and Cys-233/Cys-246. N-linked (GlcNAc...) asparagine glycosylation is found at Asn-170 and Asn-222.

As to quaternary structure, homodimer; disulfide-linked. Interacts with the adapter protein TYROBP/DAP12; the interaction leads to natural killer cell activation.

The protein localises to the cell membrane. Its function is as follows. Receptor on natural killer (NK) cells for class I MHC. The polypeptide is Killer cell lectin-like receptor 4 (Klra4) (Mus musculus (Mouse)).